The chain runs to 380 residues: Cytochrome b (380 aa).

The next 4 helical transmembrane spans lie at 28-48, 72-93, 109-129, and 174-194; these read IGSLLGLLLAMQIMTGIFLSL, WLVRASHANGASMFFMLMYAHI, WLVGGNDFLLSMATAFLGYVL, and FYSFHFLLPFVILVFVLVHLL. Heme b contacts are provided by histidine 78 and histidine 92. The heme b site is built by histidine 178 and histidine 192. Histidine 197 lines the a ubiquinone pocket. Transmembrane regions (helical) follow at residues 222 to 243, 285 to 305, 317 to 337, and 344 to 364; these read WKILWVFVLLCFLLYVLLCYIT, IGGVVALAMSVLYLYTFPLAL, IGQLLFWGYVSLFFLLTWLGA, and YISLALPLTVMFFVVPGLYMI.

Belongs to the cytochrome b family. The main subunits of complex b-c1 are: cytochrome b, cytochrome c1 and the Rieske protein. The cofactor is heme b.

The protein localises to the mitochondrion inner membrane. Its function is as follows. Component of the ubiquinol-cytochrome c reductase complex (complex III or cytochrome b-c1 complex) that is part of the mitochondrial respiratory chain. The b-c1 complex mediates electron transfer from ubiquinol to cytochrome c. Contributes to the generation of a proton gradient across the mitochondrial membrane that is then used for ATP synthesis. The chain is Cytochrome b (MT-CYB) from Cepaea nemoralis (Banded wood snail).